A 223-amino-acid chain; its full sequence is Large ribosomal subunit protein uL4c (223 aa).

Residues 61–96 form a disordered region; it reads TKTRSEVEGGGKKPWKQKGTGNARAGSSNSPLWKGG.

This sequence belongs to the universal ribosomal protein uL4 family. Part of the 50S ribosomal subunit.

Its subcellular location is the plastid. It localises to the chloroplast. Probably binds the 23S rRNA. The chain is Large ribosomal subunit protein uL4c (rpl4) from Guillardia theta (Cryptophyte).